Reading from the N-terminus, the 156-residue chain is Cell division protein SepF (156 aa).

The segment covering 23–36 (SYEKEQTDMKKQQD) has biased composition (basic and acidic residues). Positions 23 to 50 (SYEKEQTDMKKQQDPPEQQDVTFPKAQP) are disordered.

It belongs to the SepF family. In terms of assembly, homodimer. Interacts with FtsZ.

It localises to the cytoplasm. Cell division protein that is part of the divisome complex and is recruited early to the Z-ring. Probably stimulates Z-ring formation, perhaps through the cross-linking of FtsZ protofilaments. Its function overlaps with FtsA. The chain is Cell division protein SepF from Bacillus thuringiensis (strain Al Hakam).